The sequence spans 400 residues: Tektin-B1 (400 aa).

Coiled-coil stretches lie at residues 35-81, 236-294, and 310-353; these read TRLS…AKAL, FALR…LENR, and GLVN…LELK.

Belongs to the tektin family. In terms of assembly, may form a heterodimer with tektin a or exist as a homodimer. As to expression, cilia and flagella.

Its subcellular location is the cytoplasm. It is found in the cytoskeleton. Structural component of ciliary and flagellar microtubules. The protein is Tektin-B1 of Strongylocentrotus purpuratus (Purple sea urchin).